Here is a 384-residue protein sequence, read N- to C-terminus: MSSVPAPREYFLDSIRAWLMLLGIPFHISLIYSTHSWHVNSATPSWWLTLFNDFIHAFRMQVFFVISGYFSYMLFLRYPLKRWWKVRVERVGIPMLTAIPLLTLPQFILLQYVKEKTENWPTLSAYEKYNTLAWELISHLWFLLVLVILTTVSIGIFTWFPKRQETSKPRPAAISLVRLSLIFFLLGMAYAAIRRIIFIVYPAILSDGMFNFIVMQTLFYVPFFILGALAFIHPDLKARFTTPSRGCTLGAAVAFIAYLLNQRYGSGDAWMYETESVITMVMGLWMVNVVFSLGHRLLNFQSARVTYFVNASLFIYLVHHPLTLFFGAYITPHISSNLIGFLCGLIFVMGIALILYEIHLRIPLLKFLFSGKPPVKQESRAAIG.

The next 10 helical transmembrane spans lie at 17-37 (AWLM…THSW), 54-74 (FIHA…SYML), 91-111 (VGIP…ILLQ), 140-160 (LWFL…FTWF), 173-193 (AISL…YAAI), 212-232 (FIVM…LAFI), 240-260 (FTTP…AYLL), 274-294 (TESV…FSLG), 311-331 (ASLF…AYIT), and 338-358 (LIGF…LYEI).

This sequence belongs to the acyltransferase 3 family. OpgC subfamily.

It is found in the cell membrane. It participates in glycan metabolism; osmoregulated periplasmic glucan (OPG) biosynthesis. Necessary for the succinyl substitution of periplasmic glucans. Could catalyze the transfer of succinyl residues from the cytoplasmic side of the membrane to the nascent glucan backbones on the periplasmic side of the membrane. The sequence is that of Glucans biosynthesis protein C from Salmonella gallinarum (strain 287/91 / NCTC 13346).